Consider the following 116-residue polypeptide: U16-barytoxin-Tl1f (116 aa).

Residues 1–20 (MKTIIVFLSLLVLATKFGDA) form the signal peptide. Residues 21 to 74 (NEGVNQEQMKEVIQNEFREDFLNEMAPMSLLQQLEAIESTLLEKEADRNSRQKR) constitute a propeptide that is removed on maturation. 3 disulfides stabilise this stretch: cysteine 75–cysteine 90, cysteine 82–cysteine 95, and cysteine 89–cysteine 110. N-linked (GlcNAc...) asparagine glycosylation is present at asparagine 85.

This sequence belongs to the neurotoxin 14 (magi-1) family. 06 (ICK-Trit) subfamily. As to expression, expressed by the venom gland.

The protein localises to the secreted. In terms of biological role, ion channel inhibitor. The protein is U16-barytoxin-Tl1f of Trittame loki (Brush-footed trapdoor spider).